Reading from the N-terminus, the 475-residue chain is Homeobox even-skipped homolog protein 2 (475 aa).

Disordered stretches follow at residues 82 to 113 (PSSE…AEAD) and 155 to 189 (TSAS…SGAD). Over residues 83–96 (SSESTVSSEIASAT) the composition is skewed to low complexity. A compositionally biased stretch (gly residues) spans 160–186 (SGLGSLHGGGGGGNSGAAALGGSGSGS). The segment at residues 191–250 (VRRYRTAFTREQIARLEKEFYRENYVSRPRRCELAAALNLPETTIKVWFQNRRMKDKRQR) is a DNA-binding region (homeobox).

It belongs to the even-skipped homeobox family.

It is found in the nucleus. In Mus musculus (Mouse), this protein is Homeobox even-skipped homolog protein 2 (Evx2).